A 73-amino-acid chain; its full sequence is Small ribosomal subunit protein bS18 (73 aa).

It belongs to the bacterial ribosomal protein bS18 family. In terms of assembly, part of the 30S ribosomal subunit. Forms a tight heterodimer with protein bS6.

Its function is as follows. Binds as a heterodimer with protein bS6 to the central domain of the 16S rRNA, where it helps stabilize the platform of the 30S subunit. The polypeptide is Small ribosomal subunit protein bS18 (Coxiella burnetii (strain Dugway 5J108-111)).